We begin with the raw amino-acid sequence, 397 residues long: Argininosuccinate synthase (397 aa).

8–16 (AYSGGLDTS) is an ATP binding site. Tyrosine 87 contacts L-citrulline. Glycine 117 serves as a coordination point for ATP. L-aspartate contacts are provided by threonine 119, asparagine 123, and aspartate 124. Residue asparagine 123 coordinates L-citrulline. L-citrulline contacts are provided by arginine 127, serine 175, glutamate 259, and tyrosine 271.

Belongs to the argininosuccinate synthase family. Type 1 subfamily. Homotetramer.

The protein localises to the cytoplasm. The enzyme catalyses L-citrulline + L-aspartate + ATP = 2-(N(omega)-L-arginino)succinate + AMP + diphosphate + H(+). It functions in the pathway amino-acid biosynthesis; L-arginine biosynthesis; L-arginine from L-ornithine and carbamoyl phosphate: step 2/3. The chain is Argininosuccinate synthase from Streptomyces clavuligerus.